A 147-amino-acid chain; its full sequence is Protein SOB FIVE-LIKE 2 (147 aa).

The SOFL-A signature appears at 18–23 (SGWTMY). The interval 32–147 (HHSEVVYEEE…ASRVKVSKTK (116 aa)) is disordered. Residues 37–77 (VYEEEDDGFSVKEVDDDGDGDEDDDDDDDDDSSNNESDDSM) are compositionally biased toward acidic residues. The SOFL-B motif lies at 76–85 (SMTSDASSWP). The segment covering 78 to 93 (TSDASSWPSTHQPPRS) has biased composition (polar residues). Low complexity predominate over residues 96-106 (NHAAAKNSNAK). Basic and acidic residues predominate over residues 114 to 131 (NRVRDRFSDEGEESELKA).

This sequence belongs to the SOFL plant protein family. Predominantly expressed in the vascular tissues of seedlings, developing leaves, flowers and siliques, but barely detectable in roots and stems.

Its subcellular location is the cytoplasm. The protein resides in the nucleus. Involved in cytokinin-mediated development. Together with SOFL2, triggers the endogenous content of specific bioactive cytokinins derived from the biosynthetic intermediates trans-zeatin riboside monophosphate (tZRMP) and N(6)-(Delta(2)-isopentenyl)adenosine monophosphate (iPRMP) such as N-glucosides trans-zeatin 7-glucoside (tZ7G), cis-zeatin 7-glucoside (cZ7G) and N(6)-(Delta(2)-isopentenyl)adenine 7-glucoside (iP7G). The chain is Protein SOB FIVE-LIKE 2 from Arabidopsis thaliana (Mouse-ear cress).